Reading from the N-terminus, the 361-residue chain is Histidinol-phosphate aminotransferase (361 aa).

Lysine 219 carries the post-translational modification N6-(pyridoxal phosphate)lysine.

This sequence belongs to the class-II pyridoxal-phosphate-dependent aminotransferase family. Histidinol-phosphate aminotransferase subfamily. Homodimer. Pyridoxal 5'-phosphate serves as cofactor.

The catalysed reaction is L-histidinol phosphate + 2-oxoglutarate = 3-(imidazol-4-yl)-2-oxopropyl phosphate + L-glutamate. Its pathway is amino-acid biosynthesis; L-histidine biosynthesis; L-histidine from 5-phospho-alpha-D-ribose 1-diphosphate: step 7/9. The sequence is that of Histidinol-phosphate aminotransferase from Acinetobacter baumannii (strain ATCC 17978 / DSM 105126 / CIP 53.77 / LMG 1025 / NCDC KC755 / 5377).